The primary structure comprises 571 residues: Mannan endo-1,4-beta-mannosidase B (571 aa).

An N-terminal signal peptide occupies residues 1–19 (MNSLSLLLFCIFFVFSTFA). The CBM6 domain occupies 22–141 (VYYEAENGKL…WMWVDAFVIN (120 aa)). In terms of domain architecture, GH26 spans 165-459 (PAAKKLYDFL…FTHKTVMNMD (295 aa)). A substrate-binding site is contributed by Trp286. Glu319 (proton donor) is an active-site residue. Positions 324 and 379 each coordinate substrate. Glu407 acts as the Nucleophile in catalysis. CBM10 domains follow at residues 491–527 (ECFSIPLGYPCCKGNTVVYTDNDGDWGVENNEWCGIG) and 534–571 (VCWSEALGYPCCVSSSDVYYTDNDGEWGVENGDWCGII).

It belongs to the glycosyl hydrolase 26 family.

It carries out the reaction Random hydrolysis of (1-&gt;4)-beta-D-mannosidic linkages in mannans, galactomannans and glucomannans.. In Piromyces sp, this protein is Mannan endo-1,4-beta-mannosidase B (MANB).